We begin with the raw amino-acid sequence, 658 residues long: Biosynthetic arginine decarboxylase (658 aa).

Residue lysine 127 is modified to N6-(pyridoxal phosphate)lysine. 307-317 lines the substrate pocket; it reads FDVGGGLGVDY.

It belongs to the Orn/Lys/Arg decarboxylase class-II family. SpeA subfamily. Homotetramer. Requires Mg(2+) as cofactor. It depends on pyridoxal 5'-phosphate as a cofactor.

It localises to the periplasm. The catalysed reaction is L-arginine + H(+) = agmatine + CO2. The protein operates within amine and polyamine biosynthesis; agmatine biosynthesis; agmatine from L-arginine: step 1/1. Functionally, catalyzes the biosynthesis of agmatine from arginine. This Escherichia coli O157:H7 protein is Biosynthetic arginine decarboxylase (speA).